The sequence spans 164 residues: Putative deoxyuridine 5'-triphosphate nucleotidohydrolase (164 aa).

Substrate is bound at residue 65-67 (RSG). The residue at position 71 (lysine 71) is an N6-acetyllysine; by host. Substrate is bound by residues 79–82 (GVVD), glycine 90, and 138–139 (YG).

Belongs to the dUTPase family. Mg(2+) serves as cofactor.

The catalysed reaction is dUTP + H2O = dUMP + diphosphate + H(+). Its function is as follows. This enzyme is involved in nucleotide metabolism: it produces dUMP, the immediate precursor of thymidine nucleotides and it decreases the intracellular concentration of dUTP so that uracil cannot be incorporated into DNA. The polypeptide is Putative deoxyuridine 5'-triphosphate nucleotidohydrolase (Dryophytes versicolor (chameleon treefrog)).